Here is a 479-residue protein sequence, read N- to C-terminus: 6-phosphogluconate dehydrogenase, decarboxylating (479 aa).

NADP(+) contacts are provided by residues 10–15 (GLAVMG), 33–35 (NRS), 75–77 (IKA), and asparagine 103. Substrate-binding positions include asparagine 103 and 129–131 (SGG). Residue lysine 183 is the Proton acceptor of the active site. 186–187 (HN) serves as a coordination point for substrate. Glutamate 190 (proton donor) is an active-site residue. 5 residues coordinate substrate: tyrosine 191, lysine 260, arginine 287, arginine 447, and histidine 453.

The protein belongs to the 6-phosphogluconate dehydrogenase family. As to quaternary structure, homodimer.

It catalyses the reaction 6-phospho-D-gluconate + NADP(+) = D-ribulose 5-phosphate + CO2 + NADPH. It participates in carbohydrate degradation; pentose phosphate pathway; D-ribulose 5-phosphate from D-glucose 6-phosphate (oxidative stage): step 3/3. Its function is as follows. Catalyzes the oxidative decarboxylation of 6-phosphogluconate to ribulose 5-phosphate and CO(2), with concomitant reduction of NADP to NADPH. The chain is 6-phosphogluconate dehydrogenase, decarboxylating (gnd) from Chlamydia muridarum (strain MoPn / Nigg).